We begin with the raw amino-acid sequence, 190 residues long: Elongation factor P-like protein (190 aa).

This sequence belongs to the elongation factor P family.

The protein is Elongation factor P-like protein of Escherichia fergusonii (strain ATCC 35469 / DSM 13698 / CCUG 18766 / IAM 14443 / JCM 21226 / LMG 7866 / NBRC 102419 / NCTC 12128 / CDC 0568-73).